Consider the following 313-residue polypeptide: Ribosomal RNA small subunit methyltransferase H (313 aa).

Residues 35-37 (GGH), Asp-55, Phe-79, Asp-101, and Gln-108 contribute to the S-adenosyl-L-methionine site.

The protein belongs to the methyltransferase superfamily. RsmH family.

Its subcellular location is the cytoplasm. It carries out the reaction cytidine(1402) in 16S rRNA + S-adenosyl-L-methionine = N(4)-methylcytidine(1402) in 16S rRNA + S-adenosyl-L-homocysteine + H(+). Specifically methylates the N4 position of cytidine in position 1402 (C1402) of 16S rRNA. The chain is Ribosomal RNA small subunit methyltransferase H from Salmonella agona (strain SL483).